Reading from the N-terminus, the 504-residue chain is Arabinose import ATP-binding protein AraG (504 aa).

2 consecutive ABC transporter domains span residues 8–243 and 256–499; these read LSFR…MVGR and YGEE…MPKV. ATP is bound at residue 40 to 47; sequence GENGAGKS.

It belongs to the ABC transporter superfamily. Arabinose importer (TC 3.A.1.2.2) family. The complex is composed of two ATP-binding proteins (AraG), two transmembrane proteins (AraH) and a solute-binding protein (AraF).

The protein localises to the cell inner membrane. It carries out the reaction L-arabinose(out) + ATP + H2O = L-arabinose(in) + ADP + phosphate + H(+). Part of the ABC transporter complex AraFGH involved in arabinose import. Responsible for energy coupling to the transport system. This is Arabinose import ATP-binding protein AraG from Escherichia coli O6:K15:H31 (strain 536 / UPEC).